Consider the following 500-residue polypeptide: NAD(P)H-quinone oxidoreductase chain 4, chloroplastic (500 aa).

14 helical membrane passes run 4–24 (FPWL…MLFL), 35–55 (YTIC…CYNF), 87–107 (IGTI…AFPV), 113–130 (FFHF…GSFS), 134–154 (LLLF…LLSM), 167–187 (FILY…GISL), 211–231 (ILFY…IPLH), 242–262 (HYST…YGLV), 272–292 (AHSM…IYAA), 305–325 (IAYS…SITD), 330–350 (GAIL…FLAG), 386–406 (LALP…GIIT), 416–436 (ILII…LLSM), and 462–482 (LFLS…PDFV).

This sequence belongs to the complex I subunit 4 family.

The protein localises to the plastid. Its subcellular location is the chloroplast thylakoid membrane. The catalysed reaction is a plastoquinone + NADH + (n+1) H(+)(in) = a plastoquinol + NAD(+) + n H(+)(out). It catalyses the reaction a plastoquinone + NADPH + (n+1) H(+)(in) = a plastoquinol + NADP(+) + n H(+)(out). The protein is NAD(P)H-quinone oxidoreductase chain 4, chloroplastic of Arabis hirsuta (Hairy rock-cress).